The following is a 172-amino-acid chain: Shikimate kinase (172 aa).

Gly14 to Thr19 contacts ATP. Ser18 serves as a coordination point for Mg(2+). Positions 36, 60, and 82 each coordinate substrate. Arg120 lines the ATP pocket. Arg140 lines the substrate pocket.

Belongs to the shikimate kinase family. In terms of assembly, monomer. Mg(2+) serves as cofactor.

The protein resides in the cytoplasm. The enzyme catalyses shikimate + ATP = 3-phosphoshikimate + ADP + H(+). Its pathway is metabolic intermediate biosynthesis; chorismate biosynthesis; chorismate from D-erythrose 4-phosphate and phosphoenolpyruvate: step 5/7. Its function is as follows. Catalyzes the specific phosphorylation of the 3-hydroxyl group of shikimic acid using ATP as a cosubstrate. This chain is Shikimate kinase, found in Tolumonas auensis (strain DSM 9187 / NBRC 110442 / TA 4).